A 550-amino-acid chain; its full sequence is Eukaryotic translation initiation factor 3 subunit D (550 aa).

An RNA gate region spans residues 288–302; sequence DFDLLTVSETANEPP. The interval 526–550 is disordered; it reads PDGTFSSDEEEDDDDEDEEVEEEES. The segment covering 532-550 has biased composition (acidic residues); sequence SDEEEDDDDEDEEVEEEES.

The protein belongs to the eIF-3 subunit D family. Component of the eukaryotic translation initiation factor 3 (eIF-3) complex, which is composed of 13 subunits: eif3a, eif3b, eif3c, eif3d, eif3e, eif3f, eif3g, eif3h, eif3i, eif3j, eif3k, eif3l and eif3m.

It localises to the cytoplasm. Its function is as follows. mRNA cap-binding component of the eukaryotic translation initiation factor 3 (eIF-3) complex, which is involved in protein synthesis of a specialized repertoire of mRNAs and, together with other initiation factors, stimulates binding of mRNA and methionyl-tRNAi to the 40S ribosome. The eIF-3 complex specifically targets and initiates translation of a subset of mRNAs involved in cell proliferation. In the eIF-3 complex, eif3d specifically recognizes and binds the 7-methylguanosine cap of a subset of mRNAs. The sequence is that of Eukaryotic translation initiation factor 3 subunit D (eif3d) from Xenopus laevis (African clawed frog).